The sequence spans 259 residues: Thiazole synthase (259 aa).

Lysine 102 functions as the Schiff-base intermediate with DXP in the catalytic mechanism. 1-deoxy-D-xylulose 5-phosphate-binding positions include glycine 163, 189–190 (AG), and 211–212 (NT).

This sequence belongs to the ThiG family. As to quaternary structure, homotetramer. Forms heterodimers with either ThiH or ThiS.

Its subcellular location is the cytoplasm. It carries out the reaction [ThiS sulfur-carrier protein]-C-terminal-Gly-aminoethanethioate + 2-iminoacetate + 1-deoxy-D-xylulose 5-phosphate = [ThiS sulfur-carrier protein]-C-terminal Gly-Gly + 2-[(2R,5Z)-2-carboxy-4-methylthiazol-5(2H)-ylidene]ethyl phosphate + 2 H2O + H(+). It participates in cofactor biosynthesis; thiamine diphosphate biosynthesis. Its function is as follows. Catalyzes the rearrangement of 1-deoxy-D-xylulose 5-phosphate (DXP) to produce the thiazole phosphate moiety of thiamine. Sulfur is provided by the thiocarboxylate moiety of the carrier protein ThiS. In vitro, sulfur can be provided by H(2)S. In Novosphingobium aromaticivorans (strain ATCC 700278 / DSM 12444 / CCUG 56034 / CIP 105152 / NBRC 16084 / F199), this protein is Thiazole synthase.